The following is a 375-amino-acid chain: Hemolysin BL-binding component (375 aa).

The N-terminal stretch at 1-31 (MIKKIPYKLLAVSTLLTITTANVVSPVATFA) is a signal peptide. A helical membrane pass occupies residues 232 to 252 (FNVMKGAILGLPIIGGIIVGV).

In terms of assembly, composed of a binding component, B, and two lytic components, L1 and L2. All three subunits act synergically to cause hemolysis.

It localises to the secreted. The protein resides in the host cell membrane. In terms of biological role, cytotoxic protein, part of the enterotoxin complex. Responsible for binding to erythrocytes. This enterotoxin is thought to be the cause of the diarrheal form of gastroenteritis caused by food-borne strains of B.cereus. The sequence is that of Hemolysin BL-binding component (hblA) from Bacillus cereus.